We begin with the raw amino-acid sequence, 313 residues long: Porphobilinogen deaminase (313 aa).

The residue at position 242 (Cys242) is an S-(dipyrrolylmethanemethyl)cysteine.

It belongs to the HMBS family. As to quaternary structure, monomer. Dipyrromethane is required as a cofactor.

It catalyses the reaction 4 porphobilinogen + H2O = hydroxymethylbilane + 4 NH4(+). It functions in the pathway porphyrin-containing compound metabolism; protoporphyrin-IX biosynthesis; coproporphyrinogen-III from 5-aminolevulinate: step 2/4. In terms of biological role, tetrapolymerization of the monopyrrole PBG into the hydroxymethylbilane pre-uroporphyrinogen in several discrete steps. This is Porphobilinogen deaminase from Pseudomonas putida (strain ATCC 47054 / DSM 6125 / CFBP 8728 / NCIMB 11950 / KT2440).